Here is a 361-residue protein sequence, read N- to C-terminus: GTP 3',8-cyclase (361 aa).

A disordered region spans residues 1–30; sequence MTVTALGLPTVARSTGDGSAGASPAPADGP. Low complexity predominate over residues 16–30; it reads GDGSAGASPAPADGP. In terms of domain architecture, Radical SAM core spans 34 to 252; the sequence is TYGRAATDLR…LQQHFELTPD (219 aa). Arg43 is a GTP binding site. [4Fe-4S] cluster is bound by residues Cys50 and Cys54. Tyr56 lines the S-adenosyl-L-methionine pocket. Cys57 is a binding site for [4Fe-4S] cluster. Arg94 serves as a coordination point for GTP. Gly98 is an S-adenosyl-L-methionine binding site. Residue Thr125 participates in GTP binding. Ser149 contributes to the S-adenosyl-L-methionine binding site. Residue Lys186 coordinates GTP. Met220 is an S-adenosyl-L-methionine binding site. [4Fe-4S] cluster contacts are provided by Cys288 and Cys291. 293-295 is a GTP binding site; it reads RTR. Position 305 (Cys305) interacts with [4Fe-4S] cluster.

This sequence belongs to the radical SAM superfamily. MoaA family. In terms of assembly, monomer and homodimer. It depends on [4Fe-4S] cluster as a cofactor.

The enzyme catalyses GTP + AH2 + S-adenosyl-L-methionine = (8S)-3',8-cyclo-7,8-dihydroguanosine 5'-triphosphate + 5'-deoxyadenosine + L-methionine + A + H(+). The protein operates within cofactor biosynthesis; molybdopterin biosynthesis. In terms of biological role, catalyzes the cyclization of GTP to (8S)-3',8-cyclo-7,8-dihydroguanosine 5'-triphosphate. The polypeptide is GTP 3',8-cyclase (Mycolicibacterium smegmatis (strain ATCC 700084 / mc(2)155) (Mycobacterium smegmatis)).